The chain runs to 266 residues: ATP synthase subunit a (266 aa).

6 consecutive transmembrane segments (helical) span residues 38–58, 99–119, 126–146, 162–182, 191–211, and 224–244; these read KQML…LLAA, LLFS…IPLI, HVGG…AIGV, GVPV…NFLV, LFAT…GIEY, and SVLV…IMAL.

The protein belongs to the ATPase A chain family. F-type ATPases have 2 components, CF(1) - the catalytic core - and CF(0) - the membrane proton channel. CF(1) has five subunits: alpha(3), beta(3), gamma(1), delta(1), epsilon(1). CF(0) has three main subunits: a(1), b(2) and c(9-12). The alpha and beta chains form an alternating ring which encloses part of the gamma chain. CF(1) is attached to CF(0) by a central stalk formed by the gamma and epsilon chains, while a peripheral stalk is formed by the delta and b chains.

Its subcellular location is the cell membrane. Functionally, key component of the proton channel; it plays a direct role in the translocation of protons across the membrane. This is ATP synthase subunit a from Arthrobacter sp. (strain FB24).